Here is a 154-residue protein sequence, read N- to C-terminus: Nuclear cap-binding protein subunit 2 (154 aa).

Residues Tyr-10, Tyr-33, 102-106 (RVDWD), 113-117 (RQYGR), and 123-124 (QV) each bind mRNA. Residues 30 to 108 (CTLYVGNLSF…RLIRVDWDAG (79 aa)) form the RRM domain.

The protein belongs to the RRM NCBP2 family. In terms of assembly, component of the nuclear cap-binding complex (CBC), a heterodimer composed of Cbp80 and Cbp20 that interacts with m7GpppG-capped RNA. Interacts with Ars2.

The protein resides in the nucleus. In terms of biological role, component of the cap-binding complex (CBC), which binds co-transcriptionally to the 5' cap of pre-mRNAs and is involved in various processes such as pre-mRNA splicing and RNA-mediated gene silencing (RNAi). The CBC complex is involved in miRNA-mediated RNA interference via its interaction with Ars2 and is required for primary microRNAs (miRNAs) processing. Also involved in innate immunity via the short interfering RNAs (siRNAs) processing machinery by restricting the viral RNA production. In the CBC complex, Cbp20 recognizes and binds capped RNAs (m7GpppG-capped RNA) but requires Cbp80 to stabilize the movement of its N-terminal loop and lock the CBC into a high affinity cap-binding state with the cap structure. The polypeptide is Nuclear cap-binding protein subunit 2 (Cbp20) (Drosophila erecta (Fruit fly)).